Reading from the N-terminus, the 368-residue chain is MLSQIQRFGGAMFTPVLLFPFAGIVVGLAILLQNPMFVGESLTDPNSLFAQIVHIIEEGGWTVFRNMPLIFAVGLPIGLAKQAQGRACLAVMVSFLTWNYFINAMGMTWGSYFGVDFTQDAVAGSGLTMMAGIKTLDTSIIGAIIISGIVTALHNRLFDKKLPVFLGIFQGTSYVVIIAFLVMIPCAWLTLLGWPKVQMGIESLQAFLRSAGALGVWVYTFLERILIPTGLHHFIYGQFIFGPAAVEGGIQMYWAQHLQEFSLSAEPLKSLFPEGGFALHGNSKIFGAVGISLAMYFTAAPENRVKVAGLLIPATLTAMLVGITEPLEFTFLFISPLLFAVHAVLAASMSTVMYLFGVVGNMGGGLID.

The Periplasmic portion of the chain corresponds to 1–11 (MLSQIQRFGGA). The 368-residue stretch at 1–368 (MLSQIQRFGG…VGNMGGGLID (368 aa)) folds into the PTS EIIC type-1 domain. Residues 12 to 32 (MFTPVLLFPFAGIVVGLAILL) form a helical membrane-spanning segment. The Cytoplasmic portion of the chain corresponds to 33–59 (QNPMFVGESLTDPNSLFAQIVHIIEEG). Residues 60–80 (GWTVFRNMPLIFAVGLPIGLA) traverse the membrane as a helical segment. Over 81-86 (KQAQGR) the chain is Periplasmic. A helical membrane pass occupies residues 87–107 (ACLAVMVSFLTWNYFINAMGM). Residues 108–129 (TWGSYFGVDFTQDAVAGSGLTM) lie on the Cytoplasmic side of the membrane. A helical membrane pass occupies residues 130 to 150 (MAGIKTLDTSIIGAIIISGIV). Residues 151 to 173 (TALHNRLFDKKLPVFLGIFQGTS) are Periplasmic-facing. The chain crosses the membrane as a helical span at residues 174-194 (YVVIIAFLVMIPCAWLTLLGW). At 195-198 (PKVQ) the chain is on the cytoplasmic side. The helical transmembrane segment at 199–221 (MGIESLQAFLRSAGALGVWVYTF) threads the bilayer. The Periplasmic segment spans residues 222–224 (LER). A helical membrane pass occupies residues 225–245 (ILIPTGLHHFIYGQFIFGPAA). Over 246–276 (VEGGIQMYWAQHLQEFSLSAEPLKSLFPEGG) the chain is Cytoplasmic. The helical transmembrane segment at 277-297 (FALHGNSKIFGAVGISLAMYF) threads the bilayer. Over 298–306 (TAAPENRVK) the chain is Periplasmic. Residues 307 to 327 (VAGLLIPATLTAMLVGITEPL) traverse the membrane as a helical segment. Residue Glu328 is a topological domain, cytoplasmic. A helical transmembrane segment spans residues 329-349 (FTFLFISPLLFAVHAVLAASM). Residues 350 to 368 (STVMYLFGVVGNMGGGLID) lie on the Periplasmic side of the membrane.

The protein localises to the cell inner membrane. Its function is as follows. The phosphoenolpyruvate-dependent sugar phosphotransferase system (PTS), a major carbohydrate active -transport system, catalyzes the phosphorylation of incoming sugar substrates concomitant with their translocation across the cell membrane. This operon may be cryptic in wild-type K12 strains. This is Phosphotransferase IIC component GlvC from Escherichia coli (strain K12).